We begin with the raw amino-acid sequence, 367 residues long: GDP-perosamine synthase (367 aa).

The residue at position 181 (Lys-181) is an N6-(pyridoxal phosphate)lysine.

The protein belongs to the DegT/DnrJ/EryC1 family. As to quaternary structure, homotetramer. Pyridoxal 5'-phosphate serves as cofactor.

The enzyme catalyses GDP-alpha-D-perosamine + 2-oxoglutarate = GDP-4-dehydro-alpha-D-rhamnose + L-glutamate. It participates in bacterial outer membrane biogenesis; LPS O-antigen biosynthesis. In terms of biological role, catalyzes the synthesis of GDP-perosamine from GDP-4-keto-6-deoxy-D-mannose and L-glutamate. Also shows weak activity with L-glutamine. This is GDP-perosamine synthase from Vibrio cholerae.